A 156-amino-acid polypeptide reads, in one-letter code: MSRRTSAQKRSVNPDPKFNSRLASMMVARLMDSGKKSLAFRILYSAFDLIQERTGNDPLELFEQAVRNATPLVEVRARRVGGATYQVPMEVRSERGTAMALRWLVQYSRQRPGKSMAIKLANELMDAANETGSSVRKREETHKMAEANKAFAHYRY.

It belongs to the universal ribosomal protein uS7 family. Part of the 30S ribosomal subunit. Contacts proteins S9 and S11.

Its function is as follows. One of the primary rRNA binding proteins, it binds directly to 16S rRNA where it nucleates assembly of the head domain of the 30S subunit. Is located at the subunit interface close to the decoding center, probably blocks exit of the E-site tRNA. The chain is Small ribosomal subunit protein uS7 from Synechococcus elongatus (strain ATCC 33912 / PCC 7942 / FACHB-805) (Anacystis nidulans R2).